Here is a 316-residue protein sequence, read N- to C-terminus: MEGKDAVAIRSIVSRAKIAMTDQTPGFKVDPAFVKVKQNNQTDAFYTTQRKLSGGQTNGGSNNSNDKHHYLQDAVRLTSSQAMAAASTGAGSSSGTNVGGSSGGNSVLIPLPRSAALTHTQQQVQQTTSTLQTPVYARGDDGTYALAIDGGDYFLANNKRDFTKQADILLYRYLQAKSNNFKENGVEFSLNLLESGSLFQTWAQTGLTAKLYGALVAMMGSGQGTQVKGSVQGSSRAASVSVQTTQQSRQQSTDTQESEVVKLAKALLKSSADLAKPFTDNPTFKKALTDIQSEYKDYLAAAGKLSEFKKDLGEVS.

Disordered regions lie at residues Ala-82 to Asn-105 and Ala-238 to Glu-257. Low complexity-rich tracts occupy residues Ala-84 to Thr-96 and Ser-239 to Thr-255.

Belongs to the MG307/MG309/MG338 family.

This is an uncharacterized protein from Mycoplasma pneumoniae (strain ATCC 29342 / M129 / Subtype 1) (Mycoplasmoides pneumoniae).